Consider the following 121-residue polypeptide: Small ribosomal subunit protein bS6 (121 aa).

Belongs to the bacterial ribosomal protein bS6 family.

Its function is as follows. Binds together with bS18 to 16S ribosomal RNA. This Rickettsia conorii (strain ATCC VR-613 / Malish 7) protein is Small ribosomal subunit protein bS6.